Here is a 116-residue protein sequence, read N- to C-terminus: Propanediol dehydratase-reactivating factor small subunit (116 aa).

E31 lines the Mg(2+) pocket.

Belongs to the DdrB/PduH family. In terms of assembly, forms a heterotetramer PduG(2)/PduH(2). The cofactor is Mg(2+).

Its subcellular location is the bacterial microcompartment. The enzyme catalyses ATP + H2O = ADP + phosphate + H(+). Its pathway is polyol metabolism; 1,2-propanediol degradation. In terms of biological role, small subunit of the propanediol dehydratase-reactivating factor (DDR), which reactivates suicidally inhibited adenosylcobalamin-dependent propanediol dehydratase (diol dehydratase, DDH) found in the bacterial microcompartment (BMC) dedicated to 1,2-propanediol (1,2-PD) degradation. Reactivates inactivated DDH in the presence of ATP, Mg(2+) and free adenosylcobalamin (AdoCbl), by mediating the exchange of the tightly bound damaged cofactor AdoCbl for a free intact one. The 1,2-PD-specific bacterial microcompartment (BMC) concentrates low levels of 1,2-PD catabolic enzymes, concentrates volatile reaction intermediates thus enhancing pathway flux and keeps the level of toxic, mutagenic propionaldehyde low. This Salmonella typhimurium (strain LT2 / SGSC1412 / ATCC 700720) protein is Propanediol dehydratase-reactivating factor small subunit.